Here is a 139-residue protein sequence, read N- to C-terminus: Proline-rich protein 13 (139 aa).

Residues 1–139 (MWNPSAGPNP…SSSSSSSDSD (139 aa)) are disordered. Pro residues-rich tracts occupy residues 24 to 62 (ACPPSQNPAFPPGPCPPGIPQGNPAFPPCRPPYPVPQPG) and 70 to 91 (GPYPPPYPPAAPGMCPVNPPAP). A compositionally biased stretch (basic residues) spans 103-124 (KTRKKMKKAHKKSHKHHKHGKH). Over residues 125 to 139 (SSSSSSSSSSSSDSD) the composition is skewed to low complexity.

It is found in the nucleus. Its function is as follows. Negatively regulates TSP1 expression at the level of transcription. This down-regulation was shown to reduce taxane-induced apoptosis. This chain is Proline-rich protein 13 (Prr13), found in Rattus norvegicus (Rat).